A 75-amino-acid polypeptide reads, in one-letter code: UPF0154 protein SERP0914 (75 aa).

A helical transmembrane segment spans residues I3–L23.

This sequence belongs to the UPF0154 family.

Its subcellular location is the membrane. The chain is UPF0154 protein SERP0914 from Staphylococcus epidermidis (strain ATCC 35984 / DSM 28319 / BCRC 17069 / CCUG 31568 / BM 3577 / RP62A).